The chain runs to 241 residues: 1-(5-phosphoribosyl)-5-[(5-phosphoribosylamino)methylideneamino] imidazole-4-carboxamide isomerase (241 aa).

The active-site Proton acceptor is the aspartate 8. Aspartate 130 (proton donor) is an active-site residue.

Belongs to the HisA/HisF family.

It is found in the cytoplasm. The catalysed reaction is 1-(5-phospho-beta-D-ribosyl)-5-[(5-phospho-beta-D-ribosylamino)methylideneamino]imidazole-4-carboxamide = 5-[(5-phospho-1-deoxy-D-ribulos-1-ylimino)methylamino]-1-(5-phospho-beta-D-ribosyl)imidazole-4-carboxamide. Its pathway is amino-acid biosynthesis; L-histidine biosynthesis; L-histidine from 5-phospho-alpha-D-ribose 1-diphosphate: step 4/9. This Leptospira interrogans serogroup Icterohaemorrhagiae serovar copenhageni (strain Fiocruz L1-130) protein is 1-(5-phosphoribosyl)-5-[(5-phosphoribosylamino)methylideneamino] imidazole-4-carboxamide isomerase.